A 233-amino-acid chain; its full sequence is 7-cyano-7-deazaguanine synthase (233 aa).

An ATP-binding site is contributed by 11-21 (LSGGLDSSTVL). 4 residues coordinate Zn(2+): C195, C203, C206, and C209.

This sequence belongs to the QueC family. Zn(2+) is required as a cofactor.

The enzyme catalyses 7-carboxy-7-deazaguanine + NH4(+) + ATP = 7-cyano-7-deazaguanine + ADP + phosphate + H2O + H(+). It participates in purine metabolism; 7-cyano-7-deazaguanine biosynthesis. Its function is as follows. Catalyzes the ATP-dependent conversion of 7-carboxy-7-deazaguanine (CDG) to 7-cyano-7-deazaguanine (preQ(0)). This Thermosynechococcus vestitus (strain NIES-2133 / IAM M-273 / BP-1) protein is 7-cyano-7-deazaguanine synthase.